The chain runs to 262 residues: 5'-nucleotidase SurE (262 aa).

D8, D9, S39, and N95 together coordinate a divalent metal cation.

Belongs to the SurE nucleotidase family. A divalent metal cation is required as a cofactor.

Its subcellular location is the cytoplasm. It carries out the reaction a ribonucleoside 5'-phosphate + H2O = a ribonucleoside + phosphate. Functionally, nucleotidase that shows phosphatase activity on nucleoside 5'-monophosphates. The sequence is that of 5'-nucleotidase SurE from Methanothermobacter thermautotrophicus (strain ATCC 29096 / DSM 1053 / JCM 10044 / NBRC 100330 / Delta H) (Methanobacterium thermoautotrophicum).